Reading from the N-terminus, the 259-residue chain is MALLQKTRIINSMLQAAAGKPVNFKEMAETLRDVIDSNIFVVSRRGKLLGYSINQQIENDRMKKMLEDRQFPEEYTRNLFNVPETSSNLDINSEYTAFPVENRDLFQAGLTTIVPIIGGGERLGTLILSRLQDQFEDDDLILAEYGATVVGMEILREKAEEIEEEARSKAVVQMAISSLSYSELEAIEHIFEELDGNEGLLVASKIADRVGITRSVIVNALRKLESAGVIESRSLGMKGTYIKVLNNKFLIELENLKSH.

Residues 1–155 are GAF domain; it reads MALLQKTRII…GATVVGMEIL (155 aa). A DNA-binding region (H-T-H motif) is located at residues 203–222; that stretch reads ASKIADRVGITRSVIVNALR. Residue S215 is modified to Phosphoserine.

It belongs to the CodY family.

Its subcellular location is the cytoplasm. In terms of biological role, DNA-binding global transcriptional regulator which is involved in the adaptive response to starvation and acts by directly or indirectly controlling the expression of numerous genes in response to nutrient availability. During rapid exponential growth, CodY is highly active and represses genes whose products allow adaptation to nutrient depletion. In Bacillus velezensis (strain DSM 23117 / BGSC 10A6 / LMG 26770 / FZB42) (Bacillus amyloliquefaciens subsp. plantarum), this protein is Global transcriptional regulator CodY.